The sequence spans 294 residues: Hydroxyethylthiazole kinase (294 aa).

Met57 lines the substrate pocket. Arg132 and Ser196 together coordinate ATP. Gly223 serves as a coordination point for substrate.

The protein belongs to the Thz kinase family. Mg(2+) is required as a cofactor.

The enzyme catalyses 5-(2-hydroxyethyl)-4-methylthiazole + ATP = 4-methyl-5-(2-phosphooxyethyl)-thiazole + ADP + H(+). The protein operates within cofactor biosynthesis; thiamine diphosphate biosynthesis; 4-methyl-5-(2-phosphoethyl)-thiazole from 5-(2-hydroxyethyl)-4-methylthiazole: step 1/1. In terms of biological role, catalyzes the phosphorylation of the hydroxyl group of 4-methyl-5-beta-hydroxyethylthiazole (THZ). This is Hydroxyethylthiazole kinase from Bifidobacterium adolescentis (strain ATCC 15703 / DSM 20083 / NCTC 11814 / E194a).